The following is a 236-amino-acid chain: Small ribosomal subunit protein uS2c (236 aa).

It belongs to the universal ribosomal protein uS2 family.

It localises to the plastid. The protein resides in the chloroplast. In Oryza nivara (Indian wild rice), this protein is Small ribosomal subunit protein uS2c (rps2).